The chain runs to 292 residues: NAD kinase (292 aa).

Asp73 serves as the catalytic Proton acceptor. NAD(+) is bound by residues 73–74 (DG), 147–148 (NE), His158, Arg175, Asp177, 188–193 (TAYSLS), and Gln247.

Belongs to the NAD kinase family. It depends on a divalent metal cation as a cofactor.

It localises to the cytoplasm. The enzyme catalyses NAD(+) + ATP = ADP + NADP(+) + H(+). Involved in the regulation of the intracellular balance of NAD and NADP, and is a key enzyme in the biosynthesis of NADP. Catalyzes specifically the phosphorylation on 2'-hydroxyl of the adenosine moiety of NAD to yield NADP. This is NAD kinase from Escherichia coli (strain SMS-3-5 / SECEC).